We begin with the raw amino-acid sequence, 232 residues long: 5'-methylthioadenosine/S-adenosylhomocysteine nucleosidase (232 aa).

Glu12 acts as the Proton acceptor in catalysis. Substrate-binding positions include Gly78, Ile152, and 173–174 (ME). Asp197 (proton donor) is an active-site residue.

Belongs to the PNP/UDP phosphorylase family. MtnN subfamily. As to quaternary structure, homodimer.

It carries out the reaction S-adenosyl-L-homocysteine + H2O = S-(5-deoxy-D-ribos-5-yl)-L-homocysteine + adenine. The enzyme catalyses S-methyl-5'-thioadenosine + H2O = 5-(methylsulfanyl)-D-ribose + adenine. The catalysed reaction is 5'-deoxyadenosine + H2O = 5-deoxy-D-ribose + adenine. The protein operates within amino-acid biosynthesis; L-methionine biosynthesis via salvage pathway; S-methyl-5-thio-alpha-D-ribose 1-phosphate from S-methyl-5'-thioadenosine (hydrolase route): step 1/2. Functionally, catalyzes the irreversible cleavage of the glycosidic bond in both 5'-methylthioadenosine (MTA) and S-adenosylhomocysteine (SAH/AdoHcy) to adenine and the corresponding thioribose, 5'-methylthioribose and S-ribosylhomocysteine, respectively. Also cleaves 5'-deoxyadenosine, a toxic by-product of radical S-adenosylmethionine (SAM) enzymes, into 5-deoxyribose and adenine. Thus, is required for in vivo function of the radical SAM enzymes biotin synthase and lipoic acid synthase, that are inhibited by 5'-deoxyadenosine accumulation. This is 5'-methylthioadenosine/S-adenosylhomocysteine nucleosidase from Salmonella enteritidis PT4 (strain P125109).